The primary structure comprises 69 residues: Antimicrobial peptide ISAMP (69 aa).

Residues 1-23 form the signal peptide; the sequence is MRAVAIFIVTLLVLECVYFVMSE.

In terms of tissue distribution, expressed in the fat body, hemocytes and salivary glands of partially-fed female ticks. Not expressed in the midgut.

Its subcellular location is the secreted. Its function is as follows. Has antimicrobial activity against B.cereus (MIC=5.8 ug/ml), B.subtilis (MIC=12.3 ug/ml), S.aureus (MIC=10.4 ug/ml), E.coli Edl 933 (MIC=3.2 ug/ml) and E.coli MG/655 (MIC=4.2 ug/ml). Non-hemolytic. This Ixodes scapularis (Black-legged tick) protein is Antimicrobial peptide ISAMP.